The chain runs to 100 residues: Small ribosomal subunit protein uS14c (100 aa).

Belongs to the universal ribosomal protein uS14 family. In terms of assembly, part of the 30S ribosomal subunit.

The protein resides in the plastid. The protein localises to the chloroplast. In terms of biological role, binds 16S rRNA, required for the assembly of 30S particles. This is Small ribosomal subunit protein uS14c from Rhodomonas salina (Cryptomonas salina).